The chain runs to 148 residues: Large ribosomal subunit protein bL9 (148 aa).

It belongs to the bacterial ribosomal protein bL9 family.

Functionally, binds to the 23S rRNA. This chain is Large ribosomal subunit protein bL9, found in Staphylococcus aureus (strain bovine RF122 / ET3-1).